Consider the following 178-residue polypeptide: SPbeta prophage-derived uncharacterized protein YonC (178 aa).

The chain is SPbeta prophage-derived uncharacterized protein YonC (yonC) from Bacillus subtilis (strain 168).